An 81-amino-acid chain; its full sequence is EC protein I/II (81 aa).

The protein belongs to the metallothionein superfamily. Type 15 family.

Binds 5 molecules of zinc. May have a role in Zn(2+) homeostasis during embryogenesis. The polypeptide is EC protein I/II (Triticum aestivum (Wheat)).